The chain runs to 450 residues: UDP-N-acetylmuramate--L-alanine ligase (450 aa).

112–118 (GTHGKTT) provides a ligand contact to ATP.

This sequence belongs to the MurCDEF family.

The protein resides in the cytoplasm. It catalyses the reaction UDP-N-acetyl-alpha-D-muramate + L-alanine + ATP = UDP-N-acetyl-alpha-D-muramoyl-L-alanine + ADP + phosphate + H(+). Its pathway is cell wall biogenesis; peptidoglycan biosynthesis. Its function is as follows. Cell wall formation. The chain is UDP-N-acetylmuramate--L-alanine ligase from Endomicrobium trichonymphae.